Reading from the N-terminus, the 198-residue chain is 3-isopropylmalate dehydratase small subunit (198 aa).

This sequence belongs to the LeuD family. LeuD type 1 subfamily. As to quaternary structure, heterodimer of LeuC and LeuD.

It carries out the reaction (2R,3S)-3-isopropylmalate = (2S)-2-isopropylmalate. Its pathway is amino-acid biosynthesis; L-leucine biosynthesis; L-leucine from 3-methyl-2-oxobutanoate: step 2/4. In terms of biological role, catalyzes the isomerization between 2-isopropylmalate and 3-isopropylmalate, via the formation of 2-isopropylmaleate. The polypeptide is 3-isopropylmalate dehydratase small subunit (Colwellia psychrerythraea (strain 34H / ATCC BAA-681) (Vibrio psychroerythus)).